The following is a 592-amino-acid chain: Inactive metallocarboxypeptidase ECM14 (592 aa).

The N-terminal stretch at 1–21 is a signal peptide; that stretch reads MRQFTHGTLLAILALANTISA. Positions 22–174 are excised as a propeptide; the sequence is IPSFSANNYP…QTVYESYPSS (153 aa). Residues 170–179 are compositionally biased toward polar residues; the sequence is SYPSSSQRPT. Residues 170 to 191 form a disordered region; the sequence is SYPSSSQRPTDNGRGFLPSRES. The 320-residue stretch at 202-521 folds into the Peptidase M14 domain; sequence DYQPLSVIGP…NAVMVLAKFL (320 aa). Residues His-264 and Glu-267 each coordinate Zn(2+). Substrate contacts are provided by residues 264–267, Arg-322, and 339–340; these read HARE and DR. Cysteines 333 and 356 form a disulfide. Residue Asn-349 is glycosylated (N-linked (GlcNAc...) asparagine). His-396 provides a ligand contact to Zn(2+). Residue 397–398 coordinates substrate; sequence SY. Residues 542–592 form a disordered region; sequence ADKPILDDGDDDEEEDGQDKKDDSWIPDEYKNDNDHDDDDDGWGLRRRRKR. The span at 548–558 shows a compositional bias: acidic residues; that stretch reads DDGDDDEEEDG. Residues 559–575 show a composition bias toward basic and acidic residues; the sequence is QDKKDDSWIPDEYKNDN.

It belongs to the peptidase M14 family. Requires Zn(2+) as cofactor.

The protein resides in the vacuole. Its subcellular location is the secreted. In terms of biological role, inactive carboxypeptidase that may play a role in cell wall organization and biogenesis. This Ajellomyces dermatitidis (strain ER-3 / ATCC MYA-2586) (Blastomyces dermatitidis) protein is Inactive metallocarboxypeptidase ECM14 (ECM14).